A 131-amino-acid polypeptide reads, in one-letter code: UPF0251 protein MMP0619 (131 aa).

This sequence belongs to the UPF0251 family.

The polypeptide is UPF0251 protein MMP0619 (Methanococcus maripaludis (strain DSM 14266 / JCM 13030 / NBRC 101832 / S2 / LL)).